The chain runs to 129 residues: Trefoil factor 2 (129 aa).

The signal sequence occupies residues 1–23; the sequence is MGPRGLQLLAVLLALGLCAPAGA. Position 24 is a pyrrolidone carboxylic acid (glutamine 24). P-type domains are found at residues 29 to 73 and 79 to 122; these read CQCS…FHPL and EQCV…FFPI. Intrachain disulfides connect cysteine 29-cysteine 127, cysteine 31-cysteine 58, cysteine 42-cysteine 57, cysteine 52-cysteine 69, cysteine 81-cysteine 107, cysteine 91-cysteine 106, and cysteine 101-cysteine 118.

Its subcellular location is the secreted. Inhibits gastrointestinal motility and gastric acid secretion. Could function as a structural component of gastric mucus, possibly by stabilizing glycoproteins in the mucus gel through interactions with carbohydrate side chains. In Canis lupus familiaris (Dog), this protein is Trefoil factor 2 (TFF2).